Here is a 503-residue protein sequence, read N- to C-terminus: Aspartyl/glutamyl-tRNA(Asn/Gln) amidotransferase subunit B (503 aa).

Belongs to the GatB/GatE family. GatB subfamily. In terms of assembly, heterotrimer of A, B and C subunits.

The enzyme catalyses L-glutamyl-tRNA(Gln) + L-glutamine + ATP + H2O = L-glutaminyl-tRNA(Gln) + L-glutamate + ADP + phosphate + H(+). It catalyses the reaction L-aspartyl-tRNA(Asn) + L-glutamine + ATP + H2O = L-asparaginyl-tRNA(Asn) + L-glutamate + ADP + phosphate + 2 H(+). Allows the formation of correctly charged Asn-tRNA(Asn) or Gln-tRNA(Gln) through the transamidation of misacylated Asp-tRNA(Asn) or Glu-tRNA(Gln) in organisms which lack either or both of asparaginyl-tRNA or glutaminyl-tRNA synthetases. The reaction takes place in the presence of glutamine and ATP through an activated phospho-Asp-tRNA(Asn) or phospho-Glu-tRNA(Gln). In Ruegeria pomeroyi (strain ATCC 700808 / DSM 15171 / DSS-3) (Silicibacter pomeroyi), this protein is Aspartyl/glutamyl-tRNA(Asn/Gln) amidotransferase subunit B.